The following is a 489-amino-acid chain: Glutamyl-tRNA(Gln) amidotransferase subunit A (489 aa).

Residues K79 and S158 each act as charge relay system in the active site. S182 functions as the Acyl-ester intermediate in the catalytic mechanism.

Belongs to the amidase family. GatA subfamily. Heterotrimer of A, B and C subunits.

It catalyses the reaction L-glutamyl-tRNA(Gln) + L-glutamine + ATP + H2O = L-glutaminyl-tRNA(Gln) + L-glutamate + ADP + phosphate + H(+). Functionally, allows the formation of correctly charged Gln-tRNA(Gln) through the transamidation of misacylated Glu-tRNA(Gln) in organisms which lack glutaminyl-tRNA synthetase. The reaction takes place in the presence of glutamine and ATP through an activated gamma-phospho-Glu-tRNA(Gln). This Anaplasma marginale (strain Florida) protein is Glutamyl-tRNA(Gln) amidotransferase subunit A.